The primary structure comprises 64 residues: Frontoxin IV (64 aa).

Cystine bridges form between Cys-3/Cys-24, Cys-6/Cys-11, Cys-17/Cys-41, Cys-45/Cys-57, and Cys-58/Cys-63.

Expressed by the venom gland.

Its subcellular location is the secreted. Functionally, produces peripheral paralysis by blocking neuromuscular transmission at the postsynaptic site. Binds to the muscular nicotinic acetylcholine receptor (nAChR). In Micrurus frontalis (Coral snake), this protein is Frontoxin IV.